The following is a 369-amino-acid chain: MASELAMSGSDLPTSPLAMEYVNDFDLMKFEVKKEPVETDRIISQCGRLIAGGSLSSTPMSTPCSSVPPSPSFSAPSPGSGTDQKTHLEDYYWMTGYPQQLNPEALGFSPEDAVEALINSSHHPLPGAFDGYARGQQLAAAAGGSVPAEEMGSAAAVVSAVIAAAAAQGGAPHYHHHHHHPHHGGGGGGGGHPHGAAPGSAPPSSASSSAAGSGGGGGGGGGGAGGLHHPHHGGGGGGGGLHFDDRFSDEQLVTMSMRELNRQLRGVSKEEVIRLKQKRRTLKNRGYAQSCRFKRVQQRHVLESEKNQLLQQVEHLKQEISRLVRERDAYKEKYEKLVSNGFRENGSSSDNPSSPEFFMYPRESSTTVM.

2 disordered regions span residues 57-85 (STPM…TDQK) and 169-243 (GGAP…GLHF). Basic residues predominate over residues 173–183 (HYHHHHHHPHH). Positions 184–193 (GGGGGGGGHP) are enriched in gly residues. Residues 194 to 211 (HGAAPGSAPPSSASSSAA) show a composition bias toward low complexity. The segment covering 212–226 (GSGGGGGGGGGGAGG) has biased composition (gly residues). The segment at 274–299 (RLKQKRRTLKNRGYAQSCRFKRVQQR) is basic motif. Residues 274–337 (RLKQKRRTLK…DAYKEKYEKL (64 aa)) enclose the bZIP domain. A leucine-zipper region spans residues 302–323 (LESEKNQLLQQVEHLKQEISRL). Positions 341–369 (GFRENGSSSDNPSSPEFFMYPRESSTTVM) are disordered. Polar residues predominate over residues 345 to 354 (NGSSSDNPSS).

Belongs to the bZIP family. Maf subfamily.

The protein localises to the host nucleus. Its function is as follows. Might be a transcriptional trans-activator. The sequence is that of Transforming protein Maf (V-MAF) from Galliformes.